The chain runs to 1092 residues: Fibrinogen-binding protein (1092 aa).

The signal sequence occupies residues 1–51; the sequence is MINKKNNLLTKKKPIANKSNKYAIRKFTVGTASIVIGATLLFGLGHNEAKA. Residues 50 to 63 are compositionally biased toward basic and acidic residues; the sequence is KAEENSVQDVKDSN. Residues 50-236 form a disordered region; that stretch reads KAEENSVQDV…GYTNIDEKIS (187 aa). The segment at 52–599 is ligand binding A region; the sequence is EENSVQDVKD…GQGQGDLPPE (548 aa). The span at 64 to 76 shows a compositional bias: acidic residues; it reads TDDELSDSNDQSS. Residues 84–98 show a composition bias toward low complexity; that stretch reads INNNQSINTDDNNQI. Positions 99–119 are enriched in basic and acidic residues; it reads IKKEETNNYDGIEKRSEDRTE. A compositionally biased stretch (polar residues) spans 120 to 140; sequence STTNVDENEATFLQKTPQDNT. Over residues 141–151 the composition is skewed to basic and acidic residues; sequence HLTEEEVKESS. A compositionally biased stretch (polar residues) spans 160–170; it reads IDTAQQPSHTT. The segment covering 195–220 has biased composition (basic and acidic residues); it reads KIKESNTESGKEENTIEQPNKVKEDS. Ca(2+)-binding residues include E294, S299, V302, and E309. An interaction with human fibrinogen region spans residues 579–590; the sequence is YDNTIAFSTSSG. CNA-B domains follow at residues 600–713 and 714–824; these read KTYK…YQTP and KYSL…YDDE. Residues 780–1068 form a disordered region; that stretch reads KPSGMTQTTT…NEDYGSKGTL (289 aa). The span at 791-801 shows a compositional bias: acidic residues; sequence SGDDDEQDADG. Residues 802-814 are compositionally biased toward basic and acidic residues; it reads EEVHVTITDHDDF. Over residues 820-1039 the composition is skewed to acidic residues; that stretch reads YYDDESDSDS…DSDSDSDNDS (220 aa). The short motif at 1053-1057 is the LPXTG sorting signal element; it reads LPDTG. Pentaglycyl murein peptidoglycan amidated threonine is present on T1056. Residues 1057–1092 constitute a propeptide, removed by sortase; that stretch reads GANEDYGSKGTLLGTLFAGLGALLLGKRRKNRKNKN.

This sequence belongs to the serine-aspartate repeat-containing protein (SDr) family.

It localises to the secreted. Its subcellular location is the cell wall. Its function is as follows. Promotes bacterial attachment to both soluble and immobilized forms of fibrinogen in a dose-dependent manner. This binding occurs through the beta-chain of human fibrinogen. Could contribute to the initiation of foreign-body infection by allowing bacteria to adhere to biomaterial surfaces that have become coated with host proteins after implantation. Is important in the pathogenesis of central venous catheter (CVC)-associated infection model. This Staphylococcus epidermidis protein is Fibrinogen-binding protein (fbe).